The primary structure comprises 345 residues: Phosphate acyltransferase (345 aa).

The protein belongs to the PlsX family. As to quaternary structure, homodimer. Probably interacts with PlsY.

Its subcellular location is the cytoplasm. The enzyme catalyses a fatty acyl-[ACP] + phosphate = an acyl phosphate + holo-[ACP]. It functions in the pathway lipid metabolism; phospholipid metabolism. Functionally, catalyzes the reversible formation of acyl-phosphate (acyl-PO(4)) from acyl-[acyl-carrier-protein] (acyl-ACP). This enzyme utilizes acyl-ACP as fatty acyl donor, but not acyl-CoA. This chain is Phosphate acyltransferase, found in Wolbachia pipientis subsp. Culex pipiens (strain wPip).